The primary structure comprises 664 residues: E3 ubiquitin-protein ligase RNF139 (664 aa).

Position 2 is an N-acetylalanine (Ala-2). The next 12 helical transmembrane spans lie at 51-71 (IVLQIFLRLFGVFASSIVLIL), 85-105 (AFLLAATSVLVNYYASLHIDF), 125-145 (SLWMALIVLQLTFGIGYVTLL), 154-174 (LIILDLLVPVIGLITELPLHI), 178-198 (LLFTSSLILTLNTVFVLAVKL), 293-313 (GMSAVISSVAHYLGLGILAFI), 323-343 (LGFVAPVLFFILALQTGLSGL), 356-376 (MCLLLTAVLHFIHGMTDPVLM), 390-410 (FPVLFVSACLFILPVLLSYVL), 420-440 (LFAVTAFCVELCLKVIVSLTV), 469-489 (SIIEFIFGVVMFGNGAYTMMF), and 495-512 (IRAFMMCLHAYFNIYLQA). An RING-type; atypical zinc finger spans residues 547–586 (CAICYHEFTTSARITPCNHYFHALCLRKWLYIQDTCPMCH). The interval 601-664 (VSNNNGFIPP…AAEEFNDDTD (64 aa)) is disordered. Residues 616 to 628 (EAVREAAAESDRE) show a composition bias toward basic and acidic residues. A compositionally biased stretch (acidic residues) spans 629 to 639 (LNEDDSTDCDD). Ser-634 carries the phosphoserine modification. Residues Thr-635 and Thr-663 each carry the phosphothreonine modification.

In terms of assembly, interacts with MHC class I and HM13. Interacts with VHL. Component of SCAP-SREBP complex composed of SREBF2, SCAP and RNF139; the complex hampers the interaction between SCAP and SEC24B, thereby reducing SREBF2 proteolytic processing. Interacts with SREBF2 (via C-terminal domain). Interacts with SCAP; the interaction inhibits the interaction of SCAP with SEC24B and hampering the ER to Golgi transport of the SCAP-SREBP complex. Interacts with SEC24B. Interacts with INSIG1 and INSIG2. Interacts with EIF3F and EIF3H; the interaction leads to protein translation inhibitions in a ubiquitination-dependent manner. Interacts with XBP1 isoform 1; the interaction induces ubiquitination and degradation of XBP1 isoform 1. Interacts with AUP1, AMFR and UBE2G2; interaction with AUP1 facilitates interaction of RNF139 with ubiquitin-conjugating enzyme UBE2G2 and ubiquitin ligase AMFR/gp78, leading to sterol-induced ubiquitination of HMGCR and its subsequent proteasomal degradation. Post-translationally, autoubiquitinated. Ubiquitination is induced by sterol and leads to ist degradation via the ubiquitin-proteasome pathway. In terms of tissue distribution, highly expressed in testis, placenta and adrenal gland. Moderate expression in heart, brain, liver, skeletal muscle and pancreas, and low expression in lung and kidney.

It is found in the endoplasmic reticulum membrane. The enzyme catalyses S-ubiquitinyl-[E2 ubiquitin-conjugating enzyme]-L-cysteine + [acceptor protein]-L-lysine = [E2 ubiquitin-conjugating enzyme]-L-cysteine + N(6)-ubiquitinyl-[acceptor protein]-L-lysine.. It functions in the pathway protein modification; protein ubiquitination. E3-ubiquitin ligase; acts as a negative regulator of cell proliferation through mechanisms involving G2/M arrest and cell death. Required for MHC class I ubiquitination in cells expressing the cytomegalovirus protein US2 before dislocation from the endoplasmic reticulum (ER). Affects SREBP processing by hindering the SREBP-SCAP complex translocation from the ER to the Golgi, thereby reducing SREBF2 target gene expression. Involved in the sterol-accelerated degradation of HMGCR. This is achieved through binding of RNF139 to INSIG1 and/or INSIG2 at the ER membrane. In addition, interaction of RNF139 with AUP1 facilitates interaction of RNF139 with ubiquitin-conjugating enzyme UBE2G2 and ubiquitin ligase AMFR, leading to ubiquitination of HMGCR. The ubiquitinated HMGCR is then released from the ER into the cytosol for subsequent destruction. Required for INSIG1 ubiquitination. May be required for EIF3 complex ubiquitination. In Homo sapiens (Human), this protein is E3 ubiquitin-protein ligase RNF139.